A 183-amino-acid polypeptide reads, in one-letter code: Large ribosomal subunit protein uL5 (183 aa).

This sequence belongs to the universal ribosomal protein uL5 family. In terms of assembly, part of the 50S ribosomal subunit; part of the 5S rRNA/L5/L18/L25 subcomplex. Contacts the 5S rRNA and the P site tRNA. Forms a bridge to the 30S subunit in the 70S ribosome.

Its function is as follows. This is one of the proteins that bind and probably mediate the attachment of the 5S RNA into the large ribosomal subunit, where it forms part of the central protuberance. In the 70S ribosome it contacts protein S13 of the 30S subunit (bridge B1b), connecting the 2 subunits; this bridge is implicated in subunit movement. Contacts the P site tRNA; the 5S rRNA and some of its associated proteins might help stabilize positioning of ribosome-bound tRNAs. The protein is Large ribosomal subunit protein uL5 of Christiangramia forsetii (strain DSM 17595 / CGMCC 1.15422 / KT0803) (Gramella forsetii).